We begin with the raw amino-acid sequence, 191 residues long: Pyridoxal 5'-phosphate synthase subunit PdxT (191 aa).

46-48 (GES) is a binding site for L-glutamine. Residue C75 is the Nucleophile of the active site. L-glutamine contacts are provided by residues R101 and 129-130 (IR). Active-site charge relay system residues include H165 and E167.

The protein belongs to the glutaminase PdxT/SNO family. In terms of assembly, in the presence of PdxS, forms a dodecamer of heterodimers. Only shows activity in the heterodimer.

The catalysed reaction is aldehydo-D-ribose 5-phosphate + D-glyceraldehyde 3-phosphate + L-glutamine = pyridoxal 5'-phosphate + L-glutamate + phosphate + 3 H2O + H(+). The enzyme catalyses L-glutamine + H2O = L-glutamate + NH4(+). Its pathway is cofactor biosynthesis; pyridoxal 5'-phosphate biosynthesis. In terms of biological role, catalyzes the hydrolysis of glutamine to glutamate and ammonia as part of the biosynthesis of pyridoxal 5'-phosphate. The resulting ammonia molecule is channeled to the active site of PdxS. In Staphylococcus saprophyticus subsp. saprophyticus (strain ATCC 15305 / DSM 20229 / NCIMB 8711 / NCTC 7292 / S-41), this protein is Pyridoxal 5'-phosphate synthase subunit PdxT.